The chain runs to 95 residues: Small ribosomal subunit protein bS6 (95 aa).

Belongs to the bacterial ribosomal protein bS6 family.

Binds together with bS18 to 16S ribosomal RNA. This is Small ribosomal subunit protein bS6 from Desulforamulus reducens (strain ATCC BAA-1160 / DSM 100696 / MI-1) (Desulfotomaculum reducens).